Reading from the N-terminus, the 517-residue chain is Optineurin (517 aa).

Coiled coils occupy residues 15–127 (NLGS…DLVA) and 174–453 (KAES…LGRH). 2 disordered regions span residues 216 to 237 (KLEH…TNAS) and 454 to 488 (SMSE…WQQQ). Positions 222–237 (SSAQTSLPSAAETNAS) are enriched in polar residues. The CCHC NOA-type zinc finger occupies 487–517 (QQNIPDHACPKCGEVLPDLDSLQIHIMDCII). Cys495, Cys498, His511, and Cys515 together coordinate Zn(2+).

It localises to the cytoplasm. Its subcellular location is the perinuclear region. It is found in the golgi apparatus. The protein resides in the trans-Golgi network. The protein localises to the cytoplasmic vesicle. It localises to the recycling endosome. Its subcellular location is the autophagosome. Functionally, probably part of the TNF-alpha signaling pathway that can shift the equilibrium toward induction of cell death. May act by regulating membrane trafficking and cellular morphogenesis. This is Optineurin (optn) from Danio rerio (Zebrafish).